Here is a 106-residue protein sequence, read N- to C-terminus: Ferredoxin (106 aa).

C8 and C16 together coordinate [3Fe-4S] cluster. C20, C39, C42, and C45 together coordinate [4Fe-4S] cluster. In terms of domain architecture, 4Fe-4S ferredoxin-type spans R30–D59. A [3Fe-4S] cluster-binding site is contributed by C49. The segment at P81–D106 is disordered.

The cofactor is [4Fe-4S] cluster. [3Fe-4S] cluster serves as cofactor.

Ferredoxins are iron-sulfur proteins that transfer electrons in a wide variety of metabolic reactions. This Mycolicibacterium smegmatis (Mycobacterium smegmatis) protein is Ferredoxin (fdxA).